A 324-amino-acid chain; its full sequence is tRNA pseudouridine synthase B (324 aa).

Catalysis depends on D49, which acts as the Nucleophile.

The protein belongs to the pseudouridine synthase TruB family. Type 1 subfamily.

The catalysed reaction is uridine(55) in tRNA = pseudouridine(55) in tRNA. Functionally, responsible for synthesis of pseudouridine from uracil-55 in the psi GC loop of transfer RNAs. This chain is tRNA pseudouridine synthase B, found in Tolumonas auensis (strain DSM 9187 / NBRC 110442 / TA 4).